Consider the following 234-residue polypeptide: Zein-alpha 19B1 (234 aa).

Positions 1 to 21 (MAAKIFCLLMLLGLSASAATA) are cleaved as a signal peptide.

The protein belongs to the zein family.

Zeins are major seed storage proteins. The protein is Zein-alpha 19B1 of Zea mays (Maize).